We begin with the raw amino-acid sequence, 675 residues long: PTS system glucose-specific EIICBA component (675 aa).

Positions 3–414 (KKLFGQLQRI…FNFKTPGRED (412 aa)) constitute a PTS EIIC type-1 domain. 11 helical membrane-spanning segments follow: residues 16–36 (LMLP…GTAF), 59–79 (MMTG…ALGV), 81–101 (IGLA…FIIM), 126–146 (VLGI…GALA), 173–193 (IMMA…WPFI), 199–219 (AFST…FGFI), 273–293 (FMQG…LAIY), 303–323 (VVGG…ITEP), 328–348 (FLFV…LSFL), 355–375 (LHLG…GILP), and 378–398 (TPWW…YVVF). The region spanning 425–506 (SKLPFDVLDA…ARIMNGDITK (82 aa)) is the PTS EIIB type-1 domain. Cys-447 serves as the catalytic Phosphocysteine intermediate; for EIIB activity. The region spanning 547–651 (DKVFSEKMMG…SVVTPVIITN (105 aa)) is the PTS EIIA type-1 domain. The active-site Tele-phosphohistidine intermediate; for EIIA activity is the His-599.

It is found in the cell membrane. It catalyses the reaction N(pros)-phospho-L-histidyl-[protein] + D-glucose(out) = D-glucose 6-phosphate(in) + L-histidyl-[protein]. Functionally, the phosphoenolpyruvate-dependent sugar phosphotransferase system (sugar PTS), a major carbohydrate active transport system, catalyzes the phosphorylation of incoming sugar substrates concomitantly with their translocation across the cell membrane. This system is involved in glucose transport. The protein is PTS system glucose-specific EIICBA component (ptsG) of Staphylococcus haemolyticus (strain JCSC1435).